A 55-amino-acid chain; its full sequence is Large ribosomal subunit protein bL33 (55 aa).

It belongs to the bacterial ribosomal protein bL33 family.

The chain is Large ribosomal subunit protein bL33 from Clavibacter sepedonicus (Clavibacter michiganensis subsp. sepedonicus).